Here is a 198-residue protein sequence, read N- to C-terminus: Recombination protein RecR (198 aa).

The C4-type zinc-finger motif lies at 56-71 (CKICHSLTENEICDIC). Residues 79–174 (HLLCVVESPA…HMTRIAQGVP (96 aa)) enclose the Toprim domain.

The protein belongs to the RecR family.

Functionally, may play a role in DNA repair. It seems to be involved in an RecBC-independent recombinational process of DNA repair. It may act with RecF and RecO. This chain is Recombination protein RecR, found in Acinetobacter baylyi (strain ATCC 33305 / BD413 / ADP1).